The chain runs to 160 residues: Serine-protein kinase RsbW (160 aa).

It belongs to the anti-sigma-factor family.

It carries out the reaction L-seryl-[protein] + ATP = O-phospho-L-seryl-[protein] + ADP + H(+). The catalysed reaction is L-threonyl-[protein] + ATP = O-phospho-L-threonyl-[protein] + ADP + H(+). Functionally, negative regulator of sigma-B activity. Phosphorylates and inactivates its specific antagonist protein, RsbV. Upon phosphorylation of RsbV, RsbW is released and binds to sigma-B, thereby blocking its ability to form an RNA polymerase holoenzyme (E-sigma-B). The sequence is that of Serine-protein kinase RsbW from Bacillus cereus (strain AH187).